Consider the following 577-residue polypeptide: Arginine--tRNA ligase (577 aa).

Positions 122–132 (PNVAKEMHVGH) match the 'HIGH' region motif.

Belongs to the class-I aminoacyl-tRNA synthetase family. Monomer.

It localises to the cytoplasm. It catalyses the reaction tRNA(Arg) + L-arginine + ATP = L-arginyl-tRNA(Arg) + AMP + diphosphate. This Salmonella gallinarum (strain 287/91 / NCTC 13346) protein is Arginine--tRNA ligase.